A 109-amino-acid polypeptide reads, in one-letter code: Iron-sulfur cluster assembly protein CyaY (109 aa).

The protein belongs to the frataxin family.

In terms of biological role, involved in iron-sulfur (Fe-S) cluster assembly. May act as a regulator of Fe-S biogenesis. In Acidovorax ebreus (strain TPSY) (Diaphorobacter sp. (strain TPSY)), this protein is Iron-sulfur cluster assembly protein CyaY.